Here is a 550-residue protein sequence, read N- to C-terminus: Transcriptional repressor RHIT (550 aa).

Disordered regions lie at residues 1-67, 174-200, and 216-296; these read MSAD…ETRA, VQGK…VVEV, and KSFK…EGLA. Basic and acidic residues-rich tracts occupy residues 11-22, 45-58, and 187-200; these read AQDKERARETPG, ESPH…EPHP, and LGHE…VVEV. The KRAB domain occupies 124–193; sequence VTFEDMALYL…SRQLGHEEEE (70 aa). Residue Lys-216 forms a Glycyl lysine isopeptide (Lys-Gly) (interchain with G-Cter in SUMO2) linkage. Residues 267-281 show a composition bias toward basic and acidic residues; that stretch reads DLPKTQEGHFPEQPR. Ser-290 is subject to Phosphoserine. 8 C2H2-type zinc fingers span residues 306–328, 334–356, 362–384, 390–412, 418–440, 446–468, 474–496, and 502–524; these read YKCE…RRTH, YACT…QIIH, YTCP…QRIH, YVCD…QGTH, HKCP…QRTH, YPCP…NRTH, YHCL…QRTH, and YSCP…EKIH.

Belongs to the krueppel C2H2-type zinc-finger protein family.

The protein resides in the nucleus. Its function is as follows. Transcriptional repressor involved in regulating MPV17L expression. By regulating MPV17L expression, contributes to the regulation of genes involved in H(2)O(2) metabolism and the mitochondrial apoptotic cascade. The polypeptide is Transcriptional repressor RHIT (ZNF205) (Bos taurus (Bovine)).